The primary structure comprises 117 residues: Transcription elongation factor SPT4 (117 aa).

At Ala-2 the chain carries N-acetylalanine. The tract at residues 2–40 (ALETVPKDLRHLRACLLCSLVKTIDQFEYDGCDNCDAYL) is interaction with SUPT5H. Cys-16, Cys-19, Cys-33, and Cys-36 together coordinate Zn(2+). The C4-type zinc-finger motif lies at 16–36 (CLLCSLVKTIDQFEYDGCDNC).

It belongs to the SPT4 family. As to quaternary structure, interacts with SUPT5H to form DSIF. DSIF interacts with the positive transcription elongation factor b complex (P-TEFb complex), which is composed of CDK9 and cyclin-T (CCNT1 or CCNT2). DSIF interacts with RNA polymerase II, and this interaction is reduced by phosphorylation of the C-terminal domain (CTD) of POLR2A by P-TEFb. DSIF also interacts with the NELF complex, which is composed of NELFA, NELFB, NELFD and NELFE, and this interaction occurs following prior binding of DSIF to RNA polymerase II. DSIF also interacts with PRMT1/HRMT1L2, TATSF1, RNGTT/CAP1A, PRMT5/SKB1, SUPT6H, and can interact with PIN1. Ubiquitinated by UBR5 when not assembled in the DSIF complex, leading to its degradation: UBR5 recognizes and binds a degron that is not accessible when SUPT4H1 is part of the DSIF complex.

Its subcellular location is the nucleus. Functionally, component of the DRB sensitivity-inducing factor complex (DSIF complex), which regulates mRNA processing and transcription elongation by RNA polymerase II. DSIF positively regulates mRNA capping by stimulating the mRNA guanylyltransferase activity of RNGTT/CAP1A. DSIF also acts cooperatively with the negative elongation factor complex (NELF complex) to enhance transcriptional pausing at sites proximal to the promoter. Transcriptional pausing may facilitate the assembly of an elongation competent RNA polymerase II complex. DSIF and NELF promote pausing by inhibition of the transcription elongation factor TFIIS/S-II. TFIIS/S-II binds to RNA polymerase II at transcription pause sites and stimulates the weak intrinsic nuclease activity of the enzyme. Cleavage of blocked transcripts by RNA polymerase II promotes the resumption of transcription from the new 3' terminus and may allow repeated attempts at transcription through natural pause sites. The chain is Transcription elongation factor SPT4 (SUPT4H1) from Pongo abelii (Sumatran orangutan).